The chain runs to 292 residues: uncharacterized protein (292 aa).

Leu17, Asp55, Asn82, and Lys115 together coordinate NADP(+). Ser134 serves as the catalytic Proton donor. Tyr148, Lys152, and Thr184 together coordinate NADP(+). Catalysis depends on Tyr148, which acts as the Proton acceptor. Residue Lys152 is the Lowers pKa of active site Tyr of the active site.

This sequence belongs to the short-chain dehydrogenases/reductases (SDR) family.

It localises to the cytoplasm. This is an uncharacterized protein from Schizosaccharomyces pombe (strain 972 / ATCC 24843) (Fission yeast).